Here is a 90-residue protein sequence, read N- to C-terminus: U7-theraphotoxin-Hhn1g (90 aa).

An N-terminal signal peptide occupies residues 1–19; sequence MKTAIFTVVLALAVFAVLS. The propeptide occupies 20–50; sequence FGWEANEKALSEEFTELIHEKEAASETEARE. Intrachain disulfides connect cysteine 51/cysteine 65, cysteine 58/cysteine 70, and cysteine 64/cysteine 81.

The protein belongs to the neurotoxin 10 (Hwtx-1) family. 13 (Hntx-13) subfamily. As to expression, expressed by the venom gland.

Its subcellular location is the secreted. Its function is as follows. Ion channel inhibitor. The sequence is that of U7-theraphotoxin-Hhn1g from Cyriopagopus hainanus (Chinese bird spider).